Here is a 297-residue protein sequence, read N- to C-terminus: Urease accessory protein UreD (297 aa).

Residues 1 to 18 (MNSSAASPPAVSPHAAPS) show a composition bias toward low complexity. Disordered stretches follow at residues 1–20 (MNSS…PSRT) and 178–201 (VDQA…PRRR).

The protein belongs to the UreD family. As to quaternary structure, ureD, UreF and UreG form a complex that acts as a GTP-hydrolysis-dependent molecular chaperone, activating the urease apoprotein by helping to assemble the nickel containing metallocenter of UreC. The UreE protein probably delivers the nickel.

It is found in the cytoplasm. Required for maturation of urease via the functional incorporation of the urease nickel metallocenter. This Parafrankia sp. (strain EAN1pec) protein is Urease accessory protein UreD.